We begin with the raw amino-acid sequence, 214 residues long: GTP cyclohydrolase 1 (214 aa).

3 residues coordinate Zn(2+): Cys-108, His-111, and Cys-179.

It belongs to the GTP cyclohydrolase I family. In terms of assembly, toroid-shaped homodecamer, composed of two pentamers of five dimers.

The catalysed reaction is GTP + H2O = 7,8-dihydroneopterin 3'-triphosphate + formate + H(+). It participates in cofactor biosynthesis; 7,8-dihydroneopterin triphosphate biosynthesis; 7,8-dihydroneopterin triphosphate from GTP: step 1/1. In Shewanella putrefaciens (strain CN-32 / ATCC BAA-453), this protein is GTP cyclohydrolase 1.